We begin with the raw amino-acid sequence, 495 residues long: Histidine--tRNA ligase (495 aa).

Polar residues predominate over residues 1–10 (MTTDSEQPNT). Positions 1 to 24 (MTTDSEQPNTDFRPEARAPRGFAD) are disordered. Over residues 12-24 (FRPEARAPRGFAD) the composition is skewed to basic and acidic residues.

This sequence belongs to the class-II aminoacyl-tRNA synthetase family. Homodimer.

It localises to the cytoplasm. The catalysed reaction is tRNA(His) + L-histidine + ATP = L-histidyl-tRNA(His) + AMP + diphosphate + H(+). This chain is Histidine--tRNA ligase (hisS), found in Caulobacter vibrioides (strain ATCC 19089 / CIP 103742 / CB 15) (Caulobacter crescentus).